A 97-amino-acid polypeptide reads, in one-letter code: YcgL domain-containing protein PSPTO_3921 (97 aa).

The YcgL domain maps to 3 to 87; that stretch reads RICSIYRSPK…AEDEYIEHLP (85 aa).

The sequence is that of YcgL domain-containing protein PSPTO_3921 from Pseudomonas syringae pv. tomato (strain ATCC BAA-871 / DC3000).